We begin with the raw amino-acid sequence, 262 residues long: Proliferating cell nuclear antigen (262 aa).

The DNA-binding element occupies Arg-61–Lys-80. Lys-164 participates in a covalent cross-link: Glycyl lysine isopeptide (Lys-Gly) (interchain with G-Cter in ubiquitin).

This sequence belongs to the PCNA family. In terms of assembly, homotrimer. Forms a complex with activator 1 heteropentamer in the presence of ATP. Interacts with DNMT1. Interacts with CHAF1A. Component of the replisome complex. Post-translationally, monoubiquitinated by the UBE2B-RAD18 complex on Lys-164. Monoubiquitination at Lys-164 also takes place in undamaged proliferating cells, and is mediated by the DCX(DTL) complex, leading to enhance PCNA-dependent translesion DNA synthesis.

Its subcellular location is the nucleus. Its function is as follows. This protein is an auxiliary protein of DNA polymerase delta and is involved in the control of eukaryotic DNA replication by increasing the polymerase's processibility during elongation of the leading strand. This Gallus gallus (Chicken) protein is Proliferating cell nuclear antigen (PCNA).